We begin with the raw amino-acid sequence, 363 residues long: Protein-glutamate methylesterase/protein-glutamine glutaminase 3 (363 aa).

The 118-residue stretch at 8-125 (KVLCVDDSAL…RDGMLDYAEK (118 aa)) folds into the Response regulatory domain. At D59 the chain carries 4-aspartylphosphate. Residues 164–356 (LVSTEKLIII…RRVMARLATM (193 aa)) form the CheB-type methylesterase domain. Active-site residues include S176, H202, and D298.

The protein belongs to the CheB family. Phosphorylated by CheA. Phosphorylation of the N-terminal regulatory domain activates the methylesterase activity.

The protein localises to the cytoplasm. It catalyses the reaction [protein]-L-glutamate 5-O-methyl ester + H2O = L-glutamyl-[protein] + methanol + H(+). It carries out the reaction L-glutaminyl-[protein] + H2O = L-glutamyl-[protein] + NH4(+). In terms of biological role, involved in chemotaxis. Part of a chemotaxis signal transduction system that modulates chemotaxis in response to various stimuli. Catalyzes the demethylation of specific methylglutamate residues introduced into the chemoreceptors (methyl-accepting chemotaxis proteins or MCP) by CheR. Also mediates the irreversible deamidation of specific glutamine residues to glutamic acid. The chain is Protein-glutamate methylesterase/protein-glutamine glutaminase 3 from Burkholderia lata (strain ATCC 17760 / DSM 23089 / LMG 22485 / NCIMB 9086 / R18194 / 383).